The following is a 78-amino-acid chain: Large ribosomal subunit protein bL28 (78 aa).

The protein belongs to the bacterial ribosomal protein bL28 family.

This Psychrobacter sp. (strain PRwf-1) protein is Large ribosomal subunit protein bL28.